A 105-amino-acid chain; its full sequence is MSKIRKGDEVILNTGKDKGKRGTVLRVLPTGQVLVEGINVVKKHAKPNPMRGIAGGIISKEMPVDISNVALFNRATQKGDRVGFKTLDDGRKVRVFKSSGEVVDA.

It belongs to the universal ribosomal protein uL24 family. As to quaternary structure, part of the 50S ribosomal subunit.

Its function is as follows. One of two assembly initiator proteins, it binds directly to the 5'-end of the 23S rRNA, where it nucleates assembly of the 50S subunit. One of the proteins that surrounds the polypeptide exit tunnel on the outside of the subunit. The protein is Large ribosomal subunit protein uL24 of Methylobacillus flagellatus (strain ATCC 51484 / DSM 6875 / VKM B-1610 / KT).